The following is a 510-amino-acid chain: Probable cytosol aminopeptidase (510 aa).

The Mn(2+) site is built by Lys-268 and Asp-273. Lys-280 is a catalytic residue. The Mn(2+) site is built by Asp-291, Asp-350, and Glu-352. Arg-354 is a catalytic residue.

The protein belongs to the peptidase M17 family. Mn(2+) serves as cofactor.

The protein localises to the cytoplasm. It carries out the reaction Release of an N-terminal amino acid, Xaa-|-Yaa-, in which Xaa is preferably Leu, but may be other amino acids including Pro although not Arg or Lys, and Yaa may be Pro. Amino acid amides and methyl esters are also readily hydrolyzed, but rates on arylamides are exceedingly low.. It catalyses the reaction Release of an N-terminal amino acid, preferentially leucine, but not glutamic or aspartic acids.. Its function is as follows. Presumably involved in the processing and regular turnover of intracellular proteins. Catalyzes the removal of unsubstituted N-terminal amino acids from various peptides. The polypeptide is Probable cytosol aminopeptidase (Micrococcus luteus (strain ATCC 4698 / DSM 20030 / JCM 1464 / CCM 169 / CCUG 5858 / IAM 1056 / NBRC 3333 / NCIMB 9278 / NCTC 2665 / VKM Ac-2230) (Micrococcus lysodeikticus)).